The primary structure comprises 314 residues: Glycerate dehydrogenase (314 aa).

NAD(+) contacts are provided by residues threonine 74, 157–158 (AL), 228–230 (TAR), and aspartate 254. The active site involves arginine 230. Glutamate 259 is a catalytic residue. The active-site Proton donor is the histidine 280. 280–283 (HVAW) is an NAD(+) binding site.

This sequence belongs to the D-isomer specific 2-hydroxyacid dehydrogenase family. In terms of assembly, homodimer.

Its subcellular location is the cytoplasm. The enzyme catalyses (R)-glycerate + NAD(+) = 3-hydroxypyruvate + NADH + H(+). It participates in one-carbon metabolism; formaldehyde assimilation via serine pathway. Functionally, plays a central role in assimilation of carbon. It converts hydroxypyruvate to glycerate as a key step in the serine cycle, and may also play an important role in C2 reactions, by interconverting glyoxylate and glycolate. The polypeptide is Glycerate dehydrogenase (hprA) (Methylorubrum extorquens (strain ATCC 14718 / DSM 1338 / JCM 2805 / NCIMB 9133 / AM1) (Methylobacterium extorquens)).